Reading from the N-terminus, the 285-residue chain is MANDKLESLIEAAFEDRAQINASTQGDVRDGVERALLELDSGKLRVAEKQAGATGPDAWKVNQWLKKAVLLSFRLNDMSTIEGGPGGSSWWDKVPSKFAGWTAAEHAAAGFRSVPNCVVRRSAYIAPGVVLMPSFVNLGAYVDTGSMVDTWATVGSCAQIGKNVHLSGGVGIGGVLEPLQANPTIIEDDCFIGARSEIVEGVIIGQGSVVSMGVFISSSTKIIDRATGKIHIGYVPPYSVVVSGNLPGKNLPDGTPGPSLYCAVIVKTVDAQTRSKTGINELLRD.

Belongs to the transferase hexapeptide repeat family.

It is found in the cytoplasm. The enzyme catalyses (S)-2,3,4,5-tetrahydrodipicolinate + succinyl-CoA + H2O = (S)-2-succinylamino-6-oxoheptanedioate + CoA. It participates in amino-acid biosynthesis; L-lysine biosynthesis via DAP pathway; LL-2,6-diaminopimelate from (S)-tetrahydrodipicolinate (succinylase route): step 1/3. The protein is 2,3,4,5-tetrahydropyridine-2,6-dicarboxylate N-succinyltransferase of Beijerinckia indica subsp. indica (strain ATCC 9039 / DSM 1715 / NCIMB 8712).